The following is a 120-amino-acid chain: Ribonuclease P protein component (120 aa).

Belongs to the RnpA family. Consists of a catalytic RNA component (M1 or rnpB) and a protein subunit.

The catalysed reaction is Endonucleolytic cleavage of RNA, removing 5'-extranucleotides from tRNA precursor.. RNaseP catalyzes the removal of the 5'-leader sequence from pre-tRNA to produce the mature 5'-terminus. It can also cleave other RNA substrates such as 4.5S RNA. The protein component plays an auxiliary but essential role in vivo by binding to the 5'-leader sequence and broadening the substrate specificity of the ribozyme. The sequence is that of Ribonuclease P protein component from Desulfotalea psychrophila (strain LSv54 / DSM 12343).